A 312-amino-acid polypeptide reads, in one-letter code: Olfactory receptor 5p57 (312 aa).

The Extracellular portion of the chain corresponds to 1-25 (MEPGNYTVVTEFILLGLTDDITVSV). N-linked (GlcNAc...) asparagine glycosylation occurs at asparagine 5. The chain crosses the membrane as a helical span at residues 26–46 (ILFVMFLIVYSVTLMGNLNII). At 47–54 (VLIRTSPQ) the chain is on the cytoplasmic side. Residues 55–75 (LHTPMYLFLSHLAFLDIGYSS) form a helical membrane-spanning segment. The Extracellular segment spans residues 76–99 (SVTPIMLRGFLRKGTFIPVAGCVA). Residues cysteine 97 and cysteine 189 are joined by a disulfide bond. Residues 100-120 (QLCIVVAFGTSESFLLASMAY) form a helical membrane-spanning segment. Topologically, residues 121 to 133 (DRYVAICSPLLYS) are cytoplasmic. A helical transmembrane segment spans residues 134–154 (TQMSSTVCILLVGTSYLGGWV). Residues 155-196 (NAWIFTGCSLNLSFCGPNKINHFFCDYSPLLKLSCSHDFSFE) are Extracellular-facing. A glycan (N-linked (GlcNAc...) asparagine) is linked at asparagine 165. The helical transmembrane segment at 197 to 217 (VIPAISSGSIIVVTVFIIALS) threads the bilayer. Residues 218 to 237 (YVYILVSILKMRSTEGRQKA) are Cytoplasmic-facing. Residues 238-258 (FSTCTSHLTAVTLFFGTITFI) form a helical membrane-spanning segment. At 259–271 (YVMPQSSYSTDQN) the chain is on the extracellular side. A helical transmembrane segment spans residues 272–292 (KVVSVFYTVVIPMLNPLIYSF). Residues 293 to 312 (RNKEVKEAMKKLIAKTHWWS) are Cytoplasmic-facing.

The protein belongs to the G-protein coupled receptor 1 family.

Its subcellular location is the cell membrane. In terms of biological role, probable odorant receptor, which recognizes only aliphatic alcohols, suggesting that it may convey a 'woody' or 'sweet' sour. The chain is Olfactory receptor 5p57 from Mus musculus (Mouse).